A 502-amino-acid chain; its full sequence is ATP synthase subunit alpha (502 aa).

The tract at residues 115–135 is disordered; the sequence is VDGLGPINTTNTRPIESPAPG. 169–176 serves as a coordination point for ATP; it reads GDRQTGKT.

It belongs to the ATPase alpha/beta chains family. As to quaternary structure, F-type ATPases have 2 components, CF(1) - the catalytic core - and CF(0) - the membrane proton channel. CF(1) has five subunits: alpha(3), beta(3), gamma(1), delta(1), epsilon(1). CF(0) has three main subunits: a(1), b(2) and c(9-12). The alpha and beta chains form an alternating ring which encloses part of the gamma chain. CF(1) is attached to CF(0) by a central stalk formed by the gamma and epsilon chains, while a peripheral stalk is formed by the delta and b chains.

Its subcellular location is the cell membrane. It carries out the reaction ATP + H2O + 4 H(+)(in) = ADP + phosphate + 5 H(+)(out). Produces ATP from ADP in the presence of a proton gradient across the membrane. The alpha chain is a regulatory subunit. This chain is ATP synthase subunit alpha, found in Bacillus mycoides (strain KBAB4) (Bacillus weihenstephanensis).